Here is a 318-residue protein sequence, read N- to C-terminus: Extracellular metalloprotease AO090012001025 (318 aa).

Residues 1–23 form the signal peptide; that stretch reads MSHFPTLHILILVIANLQIQCFA. 3 N-linked (GlcNAc...) asparagine glycosylation sites follow: Asn-106, Asn-121, and Asn-193. A Zn(2+)-binding site is contributed by His-229. Residue Glu-230 is part of the active site. His-233 provides a ligand contact to Zn(2+). A disulfide bridge links Cys-268 with Cys-295.

Belongs to the peptidase M43B family.

The protein localises to the secreted. Its function is as follows. Secreted metalloproteinase that allows assimilation of proteinaceous substrates. In Aspergillus oryzae (strain ATCC 42149 / RIB 40) (Yellow koji mold), this protein is Extracellular metalloprotease AO090012001025.